A 365-amino-acid chain; its full sequence is Patr class I histocompatibility antigen, A-2 alpha chain (365 aa).

A signal peptide spans 1–24 (MAVMPPRTLLLLLSGALALTQTWA). The segment at 25–114 (GSHSMRYFFT…LRGYYNQSED (90 aa)) is alpha-1. Over 25–308 (GSHSMRYFFT…EPSSQPTIPI (284 aa)) the chain is Extracellular. Asparagine 110 is a glycosylation site (N-linked (GlcNAc...) asparagine). Positions 115 to 206 (GSHTIQIMYG…ENGKETLQRT (92 aa)) are alpha-2. 2 disulfide bridges follow: cysteine 125/cysteine 188 and cysteine 227/cysteine 283. Positions 207–298 (DPPKTHMTHH…GLPKPLTLRW (92 aa)) are alpha-3. The Ig-like C1-type domain maps to 209 to 295 (PKTHMTHHPI…QHEGLPKPLT (87 aa)). Residues 299 to 308 (EPSSQPTIPI) form a connecting peptide region. The chain crosses the membrane as a helical span at residues 309 to 332 (VGIIAGLVLLGAVITGAVVAAVMW). Residues 333–365 (RRKSSDRKGGSYTQAASSDSAQGSDVSLTACKV) lie on the Cytoplasmic side of the membrane. The disordered stretch occupies residues 339–360 (RKGGSYTQAASSDSAQGSDVSL). At serine 343 the chain carries Phosphoserine. The residue at position 344 (tyrosine 344) is a Phosphotyrosine. Residues 346 to 359 (QAASSDSAQGSDVS) show a composition bias toward low complexity. Phosphoserine is present on residues serine 349, serine 350, serine 352, serine 356, and serine 359.

It belongs to the MHC class I family. Heterodimer of an alpha chain and a beta chain (beta-2-microglobulin).

Its subcellular location is the membrane. Functionally, involved in the presentation of foreign antigens to the immune system. The chain is Patr class I histocompatibility antigen, A-2 alpha chain from Pan troglodytes (Chimpanzee).